Here is a 127-residue protein sequence, read N- to C-terminus: Small ribosomal subunit protein uS11 (127 aa).

This sequence belongs to the universal ribosomal protein uS11 family. Part of the 30S ribosomal subunit.

Its function is as follows. Located on the platform of the 30S subunit. In Picrophilus torridus (strain ATCC 700027 / DSM 9790 / JCM 10055 / NBRC 100828 / KAW 2/3), this protein is Small ribosomal subunit protein uS11.